A 750-amino-acid polypeptide reads, in one-letter code: Serine/threonine-protein kinase GE16371 (750 aa).

2 consecutive Doublecortin domains span residues 159-245 and 315-398; these read LRIK…VEYN and RIVT…AEDF. A Protein kinase domain is found at 479 to 737; the sequence is YTLGKIIGDG…SEDILDHYWT (259 aa). ATP contacts are provided by residues 485–493 and K508; that span reads IGDGNFAIV. Residue D600 is the Proton acceptor of the active site.

Belongs to the protein kinase superfamily. CAMK Ser/Thr protein kinase family. CaMK subfamily.

The catalysed reaction is L-seryl-[protein] + ATP = O-phospho-L-seryl-[protein] + ADP + H(+). The enzyme catalyses L-threonyl-[protein] + ATP = O-phospho-L-threonyl-[protein] + ADP + H(+). In Drosophila yakuba (Fruit fly), this protein is Serine/threonine-protein kinase GE16371.